We begin with the raw amino-acid sequence, 109 residues long: Red pigment-concentrating prohormone (109 aa).

A signal peptide spans 1-25 (MVRRSGVTLLVVALLVVTLMSSVSA). The residue at position 26 (Gln-26) is a Pyrrolidone carboxylic acid. Residue Trp-33 is modified to Tryptophan amide. Positions 34 to 78 (GKRAAGASGSNGGVGEAVSGLHPSVGGAPGGVVPPGSSSPGDSCG) are disordered. 2 stretches are compositionally biased toward low complexity: residues 49–59 (EAVSGLHPSVG) and 67–78 (PPGSSSPGDSCG).

The protein belongs to the AKH/HRTH/RPCH family.

It localises to the secreted. Functionally, this hormone adapts the animal to light backgrounds by stimulating concentration of the pigment of its red body-chromatophores. This Callinectes sapidus (Blue crab) protein is Red pigment-concentrating prohormone.